The primary structure comprises 419 residues: UDP-N-acetylglucosamine 1-carboxyvinyltransferase (419 aa).

22 to 23 (KN) provides a ligand contact to phosphoenolpyruvate. Arg93 serves as a coordination point for UDP-N-acetyl-alpha-D-glucosamine. Cys117 (proton donor) is an active-site residue. Cys117 carries the 2-(S-cysteinyl)pyruvic acid O-phosphothioketal modification. UDP-N-acetyl-alpha-D-glucosamine contacts are provided by Asp307 and Ile329.

It belongs to the EPSP synthase family. MurA subfamily.

Its subcellular location is the cytoplasm. The enzyme catalyses phosphoenolpyruvate + UDP-N-acetyl-alpha-D-glucosamine = UDP-N-acetyl-3-O-(1-carboxyvinyl)-alpha-D-glucosamine + phosphate. Its pathway is cell wall biogenesis; peptidoglycan biosynthesis. Cell wall formation. Adds enolpyruvyl to UDP-N-acetylglucosamine. This Shewanella woodyi (strain ATCC 51908 / MS32) protein is UDP-N-acetylglucosamine 1-carboxyvinyltransferase.